The sequence spans 341 residues: N-acetyl-gamma-glutamyl-phosphate reductase (341 aa).

Residue C145 is part of the active site.

The protein belongs to the NAGSA dehydrogenase family. Type 1 subfamily.

The protein localises to the cytoplasm. The catalysed reaction is N-acetyl-L-glutamate 5-semialdehyde + phosphate + NADP(+) = N-acetyl-L-glutamyl 5-phosphate + NADPH + H(+). It functions in the pathway amino-acid biosynthesis; L-arginine biosynthesis; N(2)-acetyl-L-ornithine from L-glutamate: step 3/4. Its function is as follows. Catalyzes the NADPH-dependent reduction of N-acetyl-5-glutamyl phosphate to yield N-acetyl-L-glutamate 5-semialdehyde. The polypeptide is N-acetyl-gamma-glutamyl-phosphate reductase (Streptomyces clavuligerus).